We begin with the raw amino-acid sequence, 334 residues long: Glyoxylate reductase (334 aa).

Residues Phe-158 to Ile-161, Ser-180 to Thr-182, and Ile-239 to Arg-241 each bind NADP(+). Residues Arg-241 and Glu-270 contribute to the active site. Residue His-288 is the Proton donor of the active site. His-288–Gly-290 contributes to the NADP(+) binding site.

It belongs to the D-isomer specific 2-hydroxyacid dehydrogenase family. GyaR subfamily. In terms of assembly, homodimer.

The protein resides in the cytoplasm. The catalysed reaction is glycolate + NAD(+) = glyoxylate + NADH + H(+). In Thermococcus gammatolerans (strain DSM 15229 / JCM 11827 / EJ3), this protein is Glyoxylate reductase.